The primary structure comprises 242 residues: uncharacterized protein (242 aa).

The protein belongs to the MtxX family.

This is an uncharacterized protein from Methanothermobacter thermautotrophicus (strain ATCC 29096 / DSM 1053 / JCM 10044 / NBRC 100330 / Delta H) (Methanobacterium thermoautotrophicum).